The sequence spans 99 residues: Cell division protein FtsB (99 aa).

Residues 1–3 are Cytoplasmic-facing; the sequence is MKF. Residues 4–21 form a helical membrane-spanning segment; that stretch reads FVIALIVLLGLLQYRLWS. Residues 22 to 99 lie on the Periplasmic side of the membrane; sequence GSNSLPEYFV…GERSVSSPSQ (78 aa). Residues 36-73 adopt a coiled-coil conformation; sequence IAVQQEGNDKLNERNQVLKEEIIDLKSGTEAIEERARN.

This sequence belongs to the FtsB family. In terms of assembly, part of a complex composed of FtsB, FtsL and FtsQ.

The protein localises to the cell inner membrane. Essential cell division protein. May link together the upstream cell division proteins, which are predominantly cytoplasmic, with the downstream cell division proteins, which are predominantly periplasmic. This Shewanella sp. (strain W3-18-1) protein is Cell division protein FtsB.